The following is a 174-amino-acid chain: ATP-dependent protease subunit HslV (174 aa).

Thr-2 is a catalytic residue. Na(+) contacts are provided by Gly-157, Cys-160, and Thr-163.

This sequence belongs to the peptidase T1B family. HslV subfamily. In terms of assembly, a double ring-shaped homohexamer of HslV is capped on each side by a ring-shaped HslU homohexamer. The assembly of the HslU/HslV complex is dependent on binding of ATP.

The protein localises to the cytoplasm. It carries out the reaction ATP-dependent cleavage of peptide bonds with broad specificity.. Its activity is regulated as follows. Allosterically activated by HslU binding. In terms of biological role, protease subunit of a proteasome-like degradation complex believed to be a general protein degrading machinery. This is ATP-dependent protease subunit HslV from Yersinia enterocolitica serotype O:8 / biotype 1B (strain NCTC 13174 / 8081).